The chain runs to 149 residues: Transcriptional repressor NrdR (149 aa).

A zinc finger spans residues 3-34 (CPFCSHSETQVVETRISEDGDSIRRRRQCASC). The ATP-cone domain maps to 49-139 (PAIVKKDGRR…VYRSFEDIDE (91 aa)).

Belongs to the NrdR family. Requires Zn(2+) as cofactor.

In terms of biological role, negatively regulates transcription of bacterial ribonucleotide reductase nrd genes and operons by binding to NrdR-boxes. In Albidiferax ferrireducens (strain ATCC BAA-621 / DSM 15236 / T118) (Rhodoferax ferrireducens), this protein is Transcriptional repressor NrdR.